We begin with the raw amino-acid sequence, 175 residues long: CASP-like protein 2C1 (175 aa).

The Cytoplasmic segment spans residues 1-7 (MVKLRET). The helical transmembrane segment at 8 to 28 (EVILRLCIVFFLLLTSCLIGL) threads the bilayer. At 29 to 45 (DSQTKEIAYIHKNVSFR) the chain is on the extracellular side. An N-linked (GlcNAc...) asparagine glycan is attached at Asn-41. The chain crosses the membrane as a helical span at residues 46–66 (YLLALEAELYIDVVVAAYNLV). Topologically, residues 67–91 (QLGLGWYNVEQKTSNPKWFSYLLDQ) are cytoplasmic. Residues 92–112 (TAAYVVFAGTSAAAQHSLLVV) traverse the membrane as a helical segment. Residues 113 to 136 (TGSRELQWMKWCYKFTRFCFQMGS) are Extracellular-facing. The helical transmembrane segment at 137–157 (AIILNYIAAALMVLLSSISAF) threads the bilayer. Residues 158–175 (NLFRLYSPKRFFRFKSSS) are Cytoplasmic-facing.

This sequence belongs to the Casparian strip membrane proteins (CASP) family. As to quaternary structure, homodimer and heterodimers.

Its subcellular location is the cell membrane. The polypeptide is CASP-like protein 2C1 (Arabidopsis thaliana (Mouse-ear cress)).